An 86-amino-acid chain; its full sequence is Large ribosomal subunit protein bL27 (86 aa).

The interval 1–24 is disordered; sequence MAHKKAGGSTRNGRDSESKRLGVK.

The protein belongs to the bacterial ribosomal protein bL27 family.

This Alcanivorax borkumensis (strain ATCC 700651 / DSM 11573 / NCIMB 13689 / SK2) protein is Large ribosomal subunit protein bL27.